A 133-amino-acid polypeptide reads, in one-letter code: Small ribosomal subunit protein uS8 (133 aa).

The protein belongs to the universal ribosomal protein uS8 family. In terms of assembly, part of the 30S ribosomal subunit. Contacts proteins S5 and S12.

Functionally, one of the primary rRNA binding proteins, it binds directly to 16S rRNA central domain where it helps coordinate assembly of the platform of the 30S subunit. This Prochlorococcus marinus (strain MIT 9312) protein is Small ribosomal subunit protein uS8.